The sequence spans 141 residues: Large ribosomal subunit protein uL11 (141 aa).

It belongs to the universal ribosomal protein uL11 family. Part of the ribosomal stalk of the 50S ribosomal subunit. Interacts with L10 and the large rRNA to form the base of the stalk. L10 forms an elongated spine to which L12 dimers bind in a sequential fashion forming a multimeric L10(L12)X complex. Post-translationally, one or more lysine residues are methylated.

Its function is as follows. Forms part of the ribosomal stalk which helps the ribosome interact with GTP-bound translation factors. The sequence is that of Large ribosomal subunit protein uL11 from Microcystis aeruginosa (strain NIES-843 / IAM M-2473).